The chain runs to 392 residues: Iripin-1 (392 aa).

The N-terminal stretch at 1–16 (MKPLVPLLFLLVSCRA) is a signal peptide. 3 N-linked (GlcNAc...) asparagine glycosylation sites follow: Asn104, Asn196, and Asn265.

This sequence belongs to the serpin family. Interacts with human KLKB1. Interacts with human ST14. Interacts with human PLG (plasmin). In terms of tissue distribution, highly expressed in salivary gland. Expressed in midgut and ovary.

The protein resides in the secreted. Serine protease inhibitor that modulates blood feeding of ticks on vertebrate species. Modestly inhibits human trypsin, plasma kallikrein (KLKB1), matriptase (ST14) and plasmin (PLG) via a classic serpin inhibitory mechanism. Modestly reduces enzymatic activity of human alpha-chymotrypsin, coagulation factor Xa (F10), factor XIIa (F12), cathepsin G (CTSG), tPA/tissue-type plasminogen activator (PLAT) and uPA/urokinase-type plasminogen activator (PLAU). Probably acts as a substrate rather than an inhibitor for the human neutrophil elastase (ELANE) and thus reduces its enzymatic activity in in vitro assays. Decreases expression of adhesion molecules VCAM1 and CD99 on the surface of human cells. Increases the production of chemokines for neutrophils and monocytes, such as KC/CXCL1, MIP-2/CXCL2 and MIP-1/CCL2, and anti-inflammatory cytokine IL10 in mouse inflammation models. Reduces the recruitment of mouse neutrophils and monocytes to the site of inflammation. Decreases expression of CXCR2 on the surface of mouse neutrophils. Increases expression of integrin ITGAM/ITGB2 on the surface of mouse neutrophils. The chain is Iripin-1 from Ixodes ricinus (Common tick).